Consider the following 43-residue polypeptide: Protein PsbN (43 aa).

The helical transmembrane segment at 7 to 27 threads the bilayer; sequence LIVFIASLLLGVTGYSVYTAF.

It belongs to the PsbN family.

The protein localises to the plastid. The protein resides in the chloroplast thylakoid membrane. Functionally, may play a role in photosystem I and II biogenesis. The polypeptide is Protein PsbN (Rhodomonas salina (Cryptomonas salina)).